We begin with the raw amino-acid sequence, 638 residues long: Threonine--tRNA ligase 2 (638 aa).

One can recognise a TGS domain in the interval 1 to 64 (MSKHVHIQLP…EEDAELSIVT (64 aa)). A catalytic region spans residues 245-535 (DHRKLGKQLG…LIEHYGGAFP (291 aa)). Residues Cys336, His387, and His512 each coordinate Zn(2+).

The protein belongs to the class-II aminoacyl-tRNA synthetase family. Homodimer. Zn(2+) is required as a cofactor.

The protein resides in the cytoplasm. It carries out the reaction tRNA(Thr) + L-threonine + ATP = L-threonyl-tRNA(Thr) + AMP + diphosphate + H(+). Catalyzes the attachment of threonine to tRNA(Thr) in a two-step reaction: L-threonine is first activated by ATP to form Thr-AMP and then transferred to the acceptor end of tRNA(Thr). Also edits incorrectly charged L-seryl-tRNA(Thr). The protein is Threonine--tRNA ligase 2 (thrZ) of Bacillus subtilis (strain 168).